We begin with the raw amino-acid sequence, 352 residues long: Ribosome biogenesis protein BRX1 homolog (352 aa).

Residues 1 to 55 are disordered; it reads MGKFSKIKKVQEEESAHQKMEWEAAGAKDSSSDDSSDESDNDDQPKQATEETRKR. Positions 9 to 22 are enriched in basic and acidic residues; that stretch reads KVQEEESAHQKMEW. Over residues 32 to 42 the composition is skewed to acidic residues; it reads SDDSSDESDND. Residues 43 to 55 show a composition bias toward basic and acidic residues; it reads DQPKQATEETRKR. The 191-residue stretch at 63 to 253 folds into the Brix domain; the sequence is ERVLVLCSRG…MVRLFAGSFE (191 aa).

The protein belongs to the BRX1 family.

It localises to the nucleus. It is found in the nucleolus. In terms of biological role, required for biogenesis of the 60S ribosomal subunit. In Caenorhabditis elegans, this protein is Ribosome biogenesis protein BRX1 homolog.